The following is a 233-amino-acid chain: Proteasome subunit alpha (233 aa).

It belongs to the peptidase T1A family. The 20S proteasome core is composed of 14 alpha and 14 beta subunits that assemble into four stacked heptameric rings, resulting in a barrel-shaped structure. The two inner rings, each composed of seven catalytic beta subunits, are sandwiched by two outer rings, each composed of seven alpha subunits. The catalytic chamber with the active sites is on the inside of the barrel. Has a gated structure, the ends of the cylinder being occluded by the N-termini of the alpha-subunits. Is capped at one or both ends by the proteasome regulatory ATPase, PAN. The N-terminus is blocked.

Its subcellular location is the cytoplasm. Its activity is regulated as follows. The formation of the proteasomal ATPase PAN-20S proteasome complex, via the docking of the C-termini of PAN into the intersubunit pockets in the alpha-rings, triggers opening of the gate for substrate entry. Interconversion between the open-gate and close-gate conformations leads to a dynamic regulation of the 20S proteasome proteolysis activity. In terms of biological role, component of the proteasome core, a large protease complex with broad specificity involved in protein degradation. The T.acidophilum proteasome is able to cleave oligopeptides after Tyr, Leu, Phe, and to a lesser extent after Glu and Arg. Thus, displays chymotrypsin-like activity and low level of caspase-like and trypsin-like activities. This is Proteasome subunit alpha from Thermoplasma acidophilum (strain ATCC 25905 / DSM 1728 / JCM 9062 / NBRC 15155 / AMRC-C165).